Consider the following 3898-residue polypeptide: Genome polyprotein (3898 aa).

Positions 1–168 (MELITNELLY…LDCPLWVTSC (168 aa)) constitute a Peptidase C53 domain. Disordered regions lie at residues 47–72 (LPHKRGERNVPTSLASLPKRGDCRSG), 172–209 (KEEGATKKKQQKPDRLEKGRMKIVPKESEKDSKTKPPD), and 223–245 (KKGKVKSKNTQDGLYHNKNKPPE). Catalysis depends on for N-terminal protease activity residues histidine 49 and cysteine 69. Over residues 172 to 207 (KEEGATKKKQQKPDRLEKGRMKIVPKESEKDSKTKP) the composition is skewed to basic and acidic residues. Asparagine 272, asparagine 281, asparagine 296, and asparagine 335 each carry an N-linked (GlcNAc...) asparagine; by host glycan. 2 cysteine pairs are disulfide-bonded: cysteine 308–cysteine 352 and cysteine 338–cysteine 339. Active-site for E(rns) glycoprotein RNase activity residues include histidine 344, glutamate 345, lysine 348, and histidine 349. 2 N-linked (GlcNAc...) asparagine; by host glycosylation sites follow: asparagine 365 and asparagine 370. Disulfide bonds link cysteine 380–cysteine 425 and cysteine 384–cysteine 408. Residues asparagine 413, asparagine 487, and asparagine 597 are each glycosylated (N-linked (GlcNAc...) asparagine; by host). The Lumenal portion of the chain corresponds to 498-666 (ASPYCDVDRK…WNAATTTAFL (169 aa)). The helical transmembrane segment at 667-687 (VCLIKMVRGQVVQGILWLLLI) threads the bilayer. The Lumenal portion of the chain corresponds to 688–1035 (TGVQGHLDCK…DHHRDYFAES (348 aa)). Intrachain disulfides connect cysteine 696/cysteine 740 and cysteine 751/cysteine 798. N-linked (GlcNAc...) asparagine; by host glycosylation is found at asparagine 809, asparagine 878, asparagine 922, and asparagine 990. Helical transmembrane passes span 1036–1056 (ILVVVVALLGGRYVLWLLVTY), 1079–1099 (NLLTHDNVEVVTYFFLLYLLL), 1108–1128 (VLLLYHILVAHPLKSVIVILL), 1144–1164 (LGQIDVCFTMVVIIIIGLIIA), 1189–1209 (PGVDAAMAVITITLLMVSYVT), 1217–1237 (WLQCILSLVSGVFLIRCLIHL), 1247–1267 (IPNWRPLTLILFYLISTTVVT), and 1281–1301 (VPILLLITTLWADFLTLILIL). Asparagine 1357 carries an N-linked (GlcNAc...) asparagine; by host glycan. A helical transmembrane segment spans residues 1360-1380 (MLLPLVRATLISCVSSKWQLI). An N-linked (GlcNAc...) asparagine; by host glycan is attached at asparagine 1419. Residues 1441 to 1589 (RNLIIKHKVR…DLEHLGWILR (149 aa)) enclose the Peptidase C74 domain. The active-site For cysteine protease NS2 activity is the histidine 1447. Residue asparagine 1451 is glycosylated (N-linked (GlcNAc...) asparagine; by host). Active-site for cysteine protease NS2 activity residues include glutamate 1461 and cysteine 1512. Residues 1568–1588 (MLMVGNLGEEVGDLEHLGWIL) traverse the membrane as a helical segment. The Peptidase S31 domain occupies 1590-1763 (GPAVCKKITE…LPIFEASSGR (174 aa)). Residues histidine 1658 and aspartate 1695 each act as charge relay system; for serine protease NS3 activity in the active site. Asparagine 1713 is a glycosylation site (N-linked (GlcNAc...) asparagine; by host). The active-site Charge relay system; for serine protease NS3 activity is the serine 1752. The Helicase ATP-binding domain occupies 1802–1960 (ITSMNRGDFK…QKHPIEEFIA (159 aa)). Residue 1815 to 1822 (LATGAGKT) participates in ATP binding. The DEAH box signature appears at 1910-1913 (DEYH). The Helicase C-terminal domain maps to 1978–2143 (GLKIPVDEMK…NVTKSFREMN (166 aa)). N-linked (GlcNAc...) asparagine; by host glycans are attached at residues asparagine 2134, asparagine 2217, asparagine 2494, asparagine 2682, asparagine 2751, asparagine 2891, and asparagine 2988. The GTP site is built by threonine 3499 and leucine 3501. In terms of domain architecture, RdRp catalytic spans 3518–3641 (PVAVSFDTKA…ITEKGLGLKF (124 aa)). Asparagine 3688 carries an N-linked (GlcNAc...) asparagine; by host glycan. Arginine 3696 and lysine 3704 together coordinate GTP. N-linked (GlcNAc...) asparagine; by host glycans are attached at residues asparagine 3777 and asparagine 3793.

It belongs to the pestivirus polyprotein family. As to quaternary structure, homodimer; disulfide-linked. Homodimer; disulfide-linked. Heterodimer with E1; disulfide-linked. In terms of assembly, interacts with host IFIH1/MDA5; this interaction is involved in the inhibition of IFN-beta production. Heavily glycosylated. Post-translationally, the viral RNA of pestiviruses is expressed as a single polyprotein which undergoes post-translational proteolytic processing resulting in the production of at least eleven individual proteins. The N-terminal protease cleaves itself from the nascent polyprotein autocatalytically and thereby generates the N-terminus of the adjacent viral capsid protein C. In terms of processing, cleavage between E2 and p7 is partial.

It localises to the virion. It is found in the host membrane. The protein resides in the virion membrane. The protein localises to the host endoplasmic reticulum membrane. Its subcellular location is the host cytoplasm. The catalysed reaction is Leu is conserved at position P1 for all four cleavage sites. Alanine is found at position P1' of the NS4A-NS4B cleavage site, whereas serine is found at position P1' of the NS3-NS4A, NS4B-NS5A and NS5A-NS5B cleavage sites.. It catalyses the reaction RNA(n) + a ribonucleoside 5'-triphosphate = RNA(n+1) + diphosphate. The enzyme catalyses a ribonucleoside 5'-triphosphate + H2O = a ribonucleoside 5'-diphosphate + phosphate + H(+). It carries out the reaction ATP + H2O = ADP + phosphate + H(+). The catalysed reaction is a ribonucleotidyl-ribonucleotide-RNA + H2O = a 3'-end 3'-phospho-ribonucleotide-RNA + a 5'-end dephospho-ribonucleoside-RNA + H(+). It catalyses the reaction a ribonucleotidyl-ribonucleotide-RNA = a 3'-end 2',3'-cyclophospho-ribonucleotide-RNA + a 5'-end dephospho-ribonucleoside-RNA. The enzyme catalyses a 3'-end 2',3'-cyclophospho-ribonucleotide-RNA + H2O = a 3'-end 3'-phospho-ribonucleotide-RNA + H(+). With respect to regulation, inhibited by Zn(2+), which binds the catalytic site. Leader cysteine autoprotease that cleaves itself from the nascent polyprotein during translation of the viral mRNA. Once released, plays a role in the inhibition of host innate immune response by interacting with host IRF3 and inducing its proteasomal degradation. In terms of biological role, packages viral RNA to form a viral nucleocapsid and thereby protects viral RNA. Also plays a role in transcription regulation. Protects the incoming virus against IFN-induced effectors. Functionally, initial binding to target cell probably involves interaction of E(rns) with glycosaminoglycans. Also possesses intrinsic ribonuclease (RNase) activity that can inhibit the production of type I interferon and assist in the development of persistent infections. Its function is as follows. E1 and/or E2 are probably responsible of cell attachment with CD46 and subsequent fusion after internalization of the virion by endocytosis. E1 and/or E2 are probably responsible of cell attachment with CD46 and subsequent fusion after internalization of the virion by endocytosis. Probably functions as a coeffector of fusion providing structural integrity to the fusion complex and possibly controlling exposure of the fusion motif in E1. In terms of biological role, plays an essential role in the virus replication cycle by acting as a viroporin. Forms ion conductive pores, which alters the cell permeability allowing the transport of ions and other small molecules. Forms a leader sequence to properly orient NS2 in the membrane. Functionally, uncleaved NS2-3 is required for production of infectious virus. Its function is as follows. Plays a role in the regulation of viral RNA replication. Multifunctional protein that contains an N-terminal protease and a C-terminal helicase, playing essential roles in viral polyprotein processing and viral genome replication. The chymotrypsin-like serine protease activity utilizes NS4A as an essential cofactor and catalyzes the cleavage of the polyprotein leading to the release of NS4A, NS4B, NS5A, and NS5B. Interacts with NS5B to enhance RNA-dependent RNA polymerase activity. In terms of biological role, acts as a cofactor for the NS3 protease activity. Functionally, induces a specific membrane alteration that serves as a scaffold for the virus replication complex. Plays a role in the inhibition of host innate immune response by inhibiting RIGI/IFIH1-mediated IFN-beta production. Its function is as follows. Replicates the viral (+) and (-) genome. Initiates the primer-independent RNA replication via a de novo mechanism requiring GTP. This Bos taurus (Bovine) protein is Genome polyprotein.